Consider the following 235-residue polypeptide: C-&gt;U-editing enzyme APOBEC-1 (235 aa).

In terms of domain architecture, CMP/dCMP-type deaminase spans 10 to 131 (GDATLRRRIK…MDQQHRQGLK (122 aa)). A Zn(2+)-binding site is contributed by histidine 60. Glutamate 62 functions as the Proton donor in the catalytic mechanism. Residues cysteine 92 and cysteine 95 each coordinate Zn(2+).

It belongs to the cytidine and deoxycytidylate deaminase family. As to quaternary structure, homodimer. Interacts with A1CF; form an mRNA editing complex. Interacts with RBM47; form an mRNA editing complex. Found in a complex with CELF2/CUGBP2 and A1CF. Interacts with HNRPAB. Interacts with SYNCRIP. Zn(2+) is required as a cofactor.

It localises to the cytoplasm. It is found in the nucleus. It catalyses the reaction a cytidine in mRNA + H2O + H(+) = a uridine in mRNA + NH4(+). The catalysed reaction is cytidine(6666) in apoB mRNA + H2O + H(+) = uridine(6666) in apoB mRNA + NH4(+). Cytidine deaminase catalyzing the cytidine to uridine postranscriptional editing of a variety of mRNAs. Form complexes with cofactors that confer differential editing activity and selectivity. Responsible for the postranscriptional editing of a CAA codon for Gln to a UAA codon for stop in the apolipoprotein B mRNA. Also involved in CGA (Arg) to UGA (Stop) editing in the NF1 mRNA. May also play a role in the epigenetic regulation of gene expression by participating in DNA demethylation. The protein is C-&gt;U-editing enzyme APOBEC-1 of Monodelphis domestica (Gray short-tailed opossum).